The primary structure comprises 701 residues: Elongation factor G (701 aa).

Residues 11 to 287 enclose the tr-type G domain; that stretch reads SRVRNFGIMA…AVVDYLPSPL (277 aa). GTP contacts are provided by residues 20-27, 84-88, and 138-141; these read AHIDAGKT, DTPGH, and NKMD.

It belongs to the TRAFAC class translation factor GTPase superfamily. Classic translation factor GTPase family. EF-G/EF-2 subfamily.

It is found in the cytoplasm. Its function is as follows. Catalyzes the GTP-dependent ribosomal translocation step during translation elongation. During this step, the ribosome changes from the pre-translocational (PRE) to the post-translocational (POST) state as the newly formed A-site-bound peptidyl-tRNA and P-site-bound deacylated tRNA move to the P and E sites, respectively. Catalyzes the coordinated movement of the two tRNA molecules, the mRNA and conformational changes in the ribosome. The sequence is that of Elongation factor G (fusA) from Mycobacterium tuberculosis (strain CDC 1551 / Oshkosh).